We begin with the raw amino-acid sequence, 109 residues long: Cell division protein ZapA (109 aa).

A coiled-coil region spans residues 21-99; that stretch reads PEQRDALNQA…IEQALLEQGR (79 aa).

This sequence belongs to the ZapA family. Type 1 subfamily. Homodimer. Interacts with FtsZ.

Its subcellular location is the cytoplasm. Activator of cell division through the inhibition of FtsZ GTPase activity, therefore promoting FtsZ assembly into bundles of protofilaments necessary for the formation of the division Z ring. It is recruited early at mid-cell but it is not essential for cell division. The polypeptide is Cell division protein ZapA (Klebsiella pneumoniae subsp. pneumoniae (strain ATCC 700721 / MGH 78578)).